Here is a 325-residue protein sequence, read N- to C-terminus: MATH domain and coiled-coil domain-containing protein At3g58340 (325 aa).

The 126-residue stretch at 6–131 (DKKFCWEIKN…NGQVMIVAEV (126 aa)) folds into the MATH domain. A coiled-coil region spans residues 266-315 (KVDWLEKKLDHVKEKKEKEQSGLIILQGIEQQLHELMHKCEKKKSEVLSV).

This Arabidopsis thaliana (Mouse-ear cress) protein is MATH domain and coiled-coil domain-containing protein At3g58340.